The primary structure comprises 83 residues: U3-theraphotoxin-Cg1a (83 aa).

A signal peptide spans 1 to 23 (MRTFTLIAILTCAVLVIFHAAAA). Residues 24–44 (EELEAQDVIETEALATLDEER) constitute a propeptide that is removed on maturation. 3 cysteine pairs are disulfide-bonded: C48/C61, C52/C75, and C69/C80.

The protein belongs to the neurotoxin 12 (Hwtx-2) family. 03 (juruin) subfamily. Contains 3 disulfide bonds. Two different connectivities are observed in similar proteins (C1-C3, C2-C5, C4-C6 or C1-C4, C2-C5, C3-C6). In terms of tissue distribution, expressed by the venom gland.

Its subcellular location is the secreted. Functionally, probable ion channel inhibitor. The sequence is that of U3-theraphotoxin-Cg1a from Chilobrachys guangxiensis (Chinese earth tiger tarantula).